We begin with the raw amino-acid sequence, 1132 residues long: Rho GTPase-activating protein gacE (1132 aa).

The 187-residue stretch at Leu-76–Phe-262 folds into the Rho-GAP domain. Disordered regions lie at residues Asn-279–Ile-354 and Asn-472–Asn-517. Positions Leu-281 to Thr-301 are enriched in low complexity. A compositionally biased stretch (polar residues) spans Ser-302 to Asp-311. 3 stretches are compositionally biased toward low complexity: residues Ser-328 to Ile-354, Ser-473 to Thr-498, and Ser-507 to Asn-517.

It is found in the cytoplasm. Rho GTPase-activating protein involved in the signal transduction pathway. The sequence is that of Rho GTPase-activating protein gacE (gacE) from Dictyostelium discoideum (Social amoeba).